The primary structure comprises 682 residues: MPRERQKRGRRAEAKRKRDDEVGDRTAPKRQKASEGDNDFNPLHSQAKIGDDYIPLEEEPASSMDTPFYGLLDPDEQEYFSHASGLLELNQFETEEEKSIFIERVYEEADGKELKIACSQSCSRLMEKLISASTVSQIKSLFNKFVGQFLNLVQHRFASHCCESLFLRAAPYVTLEMKKKSAEKNDNEGEDSSANLRLEDLFLAVLSELEGNWGYLLTERFASHTIRVLLLILAGEQLDNPSKATVIASRKKENLDKPKVTQRDKSASDRRAVPPSFNAALEKMMNDLVTGLDNTYLRALATHPVGNPVLQVLLSVELTHLGKSKARDPDSVFRRLVPDENLEEGSESAAFIKGLFYDPVGSRLLETMVQLAPGKFFKTFYKALVQERIGSLSRNEIAGHVVARILERLSKEDLKSSMDLILPEVLSLVKRSRFTVIKTLIERGVIRGVDLRPLADSLLLAFGTDPIARINNVLKLHHLNEENDDTKRSSKNSTPEQLHGSLLAQTMLKAPGPLSELIQSSLLAVTLETLIAIAKDPVASHVLQDALTLPTSTIQFRRQITSRFSGKMAELALDSSGSHVVDAVWSATENLIFIKQRFAEELLANERPLRDSFVGRAVWKNWSMDLYKRRRGHWIAVAKGLESVNPSNSENRQPPKSNLDLARARFAEKSNTSTPKKITATF.

Residues 1-15 (MPRERQKRGRRAEAK) are compositionally biased toward basic residues. Residues 1–46 (MPRERQKRGRRAEAKRKRDDEVGDRTAPKRQKASEGDNDFNPLHSQ) form a disordered region. Over residues 16 to 35 (RKRDDEVGDRTAPKRQKASE) the composition is skewed to basic and acidic residues. The Pumilio 1 repeat unit spans residues 108 to 143 (EADGKELKIACSQSCSRLMEKLISASTVSQIKSLFN). The interval 249 to 272 (SRKKENLDKPKVTQRDKSASDRRA) is disordered. Residues 250–272 (RKKENLDKPKVTQRDKSASDRRA) are compositionally biased toward basic and acidic residues. Pumilio repeat units lie at residues 347–382 (ESAAFIKGLFYDPVGSRLLETMVQLAPGKFFKTFYK), 383–419 (ALVQERIGSLSRNEIAGHVVARILERLSKEDLKSSMD), 524–562 (AVTLETLIAIAKDPVASHVLQDALTLPTSTIQFRRQITS), and 563–600 (RFSGKMAELALDSSGSHVVDAVWSATENLIFIKQRFAE).

The protein belongs to the NOP9 family.

Its subcellular location is the nucleus. It localises to the nucleolus. RNA-binding nucleolar protein required for pre-rRNA processing. Involved in production of 18S rRNA and assembly of small ribosomal subunit. This is Nucleolar protein 9 (NOP9) from Ajellomyces dermatitidis (strain ER-3 / ATCC MYA-2586) (Blastomyces dermatitidis).